The following is a 147-amino-acid chain: Methylated-DNA--protein-cysteine methyltransferase (147 aa).

Cysteine 112 functions as the Nucleophile; methyl group acceptor in the catalytic mechanism.

Belongs to the MGMT family.

The protein localises to the cytoplasm. The enzyme catalyses a 6-O-methyl-2'-deoxyguanosine in DNA + L-cysteinyl-[protein] = S-methyl-L-cysteinyl-[protein] + a 2'-deoxyguanosine in DNA. It catalyses the reaction a 4-O-methyl-thymidine in DNA + L-cysteinyl-[protein] = a thymidine in DNA + S-methyl-L-cysteinyl-[protein]. Involved in the cellular defense against the biological effects of O6-methylguanine (O6-MeG) and O4-methylthymine (O4-MeT) in DNA. Repairs the methylated nucleobase in DNA by stoichiometrically transferring the methyl group to a cysteine residue in the enzyme. This is a suicide reaction: the enzyme is irreversibly inactivated. This chain is Methylated-DNA--protein-cysteine methyltransferase, found in Archaeoglobus fulgidus (strain ATCC 49558 / DSM 4304 / JCM 9628 / NBRC 100126 / VC-16).